Reading from the N-terminus, the 445-residue chain is Argininosuccinate synthase (445 aa).

Residues 17 to 25 and alanine 43 contribute to the ATP site; that span reads AFSGGLDTS. Tyrosine 99 is a binding site for L-citrulline. Positions 129 and 131 each coordinate ATP. Threonine 131, asparagine 135, and aspartate 136 together coordinate L-aspartate. Asparagine 135 serves as a coordination point for L-citrulline. Aspartate 136 is an ATP binding site. Arginine 139 and serine 192 together coordinate L-citrulline. Aspartate 194 lines the ATP pocket. Residues threonine 201, glutamate 203, and glutamate 280 each coordinate L-citrulline.

This sequence belongs to the argininosuccinate synthase family. Type 2 subfamily. In terms of assembly, homotetramer.

It is found in the cytoplasm. The catalysed reaction is L-citrulline + L-aspartate + ATP = 2-(N(omega)-L-arginino)succinate + AMP + diphosphate + H(+). It functions in the pathway amino-acid biosynthesis; L-arginine biosynthesis; L-arginine from L-ornithine and carbamoyl phosphate: step 2/3. The sequence is that of Argininosuccinate synthase from Rhodopseudomonas palustris (strain BisA53).